The following is a 248-amino-acid chain: UDP-2,3-diacylglucosamine hydrolase (248 aa).

Positions 8, 10, 41, 79, and 114 each coordinate Mn(2+). 79-80 (NR) serves as a coordination point for substrate. The substrate site is built by Asp-122, Ser-160, Asp-171, and His-202. His-202 and His-204 together coordinate Mn(2+).

The protein belongs to the LpxH family. Mn(2+) serves as cofactor.

It localises to the cell inner membrane. The enzyme catalyses UDP-2-N,3-O-bis[(3R)-3-hydroxytetradecanoyl]-alpha-D-glucosamine + H2O = 2-N,3-O-bis[(3R)-3-hydroxytetradecanoyl]-alpha-D-glucosaminyl 1-phosphate + UMP + 2 H(+). It functions in the pathway glycolipid biosynthesis; lipid IV(A) biosynthesis; lipid IV(A) from (3R)-3-hydroxytetradecanoyl-[acyl-carrier-protein] and UDP-N-acetyl-alpha-D-glucosamine: step 4/6. In terms of biological role, hydrolyzes the pyrophosphate bond of UDP-2,3-diacylglucosamine to yield 2,3-diacylglucosamine 1-phosphate (lipid X) and UMP by catalyzing the attack of water at the alpha-P atom. Involved in the biosynthesis of lipid A, a phosphorylated glycolipid that anchors the lipopolysaccharide to the outer membrane of the cell. The polypeptide is UDP-2,3-diacylglucosamine hydrolase (Stenotrophomonas maltophilia (strain R551-3)).